The following is a 138-amino-acid chain: Cysteine desulfuration protein SufE (138 aa).

Cys51 (cysteine persulfide intermediate) is an active-site residue.

Belongs to the SufE family. In terms of assembly, homodimer. Interacts with SufS.

The protein localises to the cytoplasm. It functions in the pathway cofactor biosynthesis; iron-sulfur cluster biosynthesis. Functionally, participates in cysteine desulfuration mediated by SufS. Cysteine desulfuration mobilizes sulfur from L-cysteine to yield L-alanine and constitutes an essential step in sulfur metabolism for biosynthesis of a variety of sulfur-containing biomolecules. Functions as a sulfur acceptor for SufS, by mediating the direct transfer of the sulfur atom from the S-sulfanylcysteine of SufS, an intermediate product of cysteine desulfuration process. This chain is Cysteine desulfuration protein SufE, found in Citrobacter koseri (strain ATCC BAA-895 / CDC 4225-83 / SGSC4696).